Reading from the N-terminus, the 118-residue chain is Lutropin subunit beta (118 aa).

6 disulfide bridges follow: C9/C57, C23/C72, C26/C110, C34/C88, C38/C90, and C93/C100. N13 is a glycosylation site (N-linked (GlcNAc...) asparagine).

This sequence belongs to the glycoprotein hormones subunit beta family. In terms of assembly, heterodimer of a common alpha chain and a unique beta chain which confers biological specificity to thyrotropin, lutropin, follitropin and gonadotropin.

It is found in the secreted. Its function is as follows. Promotes spermatogenesis and ovulation by stimulating the testes and ovaries to synthesize steroids. The protein is Lutropin subunit beta (LHB) of Balaenoptera acutorostrata (Common minke whale).